Here is a 198-residue protein sequence, read N- to C-terminus: MARCKS-related protein (198 aa).

A disordered region spans residues 1 to 198; that stretch reads MGSQSSKAPR…DPAPASEQNE (198 aa). Residue glycine 2 is the site of N-myristoyl glycine attachment. At threonine 14 the chain carries Phosphothreonine. Phosphoserine is present on residues serine 22, serine 36, serine 41, and serine 48. The segment covering 53-62 has biased composition (low complexity); it reads GTEEAAGATG. A Phosphoserine modification is found at serine 71. The span at 76-85 shows a compositional bias: basic and acidic residues; sequence AKGEVPPKET. The residue at position 85 (threonine 85) is a Phosphothreonine. Residues 86-98 show a composition bias toward basic residues; sequence PKKKKKFSFKKPF. Residues 87–110 form an effector domain involved in lipid-binding and calmodulin-binding region; it reads KKKKKFSFKKPFKLSGLSFKRNRK. Phosphoserine; by PKC is present on residues serine 93, serine 101, and serine 104. Residue serine 119 is modified to Phosphoserine. Serine 120 is modified (phosphoserine; by MAPK8). A Phosphoserine modification is found at serine 132. At threonine 148 the chain carries Phosphothreonine; by MAPK8. Phosphoserine occurs at positions 151 and 162. Over residues 156–167 the composition is skewed to low complexity; sequence AKGAEASAAAKG. Threonine 170 bears the Phosphothreonine mark. Threonine 182 is subject to Phosphothreonine; by MAPK8.

It belongs to the MARCKS family. As to quaternary structure, binds to filamentous actin (F-actin), but not to monomeric G-actin, independently of its phosphorylation status. Interacts with calmodulin. Phosphorylated. Phosphorylation at Ser-120 and Thr-182 is non-redundantly catalyzed by MAPK8 in vivo. Phosphorylation at Thr-148 is preferentially catalyzed by MAPK8 in vivo, but this modification can also be catalyzed by other kinases in the absence of MAPK8. May be phosphorylated by protein kinase C, which disrupts the interaction with calmodulin.

Its subcellular location is the cytoplasm. It localises to the cytoskeleton. The protein resides in the cell membrane. Controls cell movement by regulating actin cytoskeleton homeostasis and filopodium and lamellipodium formation. When unphosphorylated, induces cell migration. When phosphorylated by MAPK8, induces actin bundles formation and stabilization, thereby reducing actin plasticity, hence restricting cell movement, including neuronal migration. May be involved in coupling the protein kinase C and calmodulin signal transduction systems. This chain is MARCKS-related protein (MARCKSL1), found in Bos taurus (Bovine).